The chain runs to 731 residues: Catalase-peroxidase (731 aa).

Residues 1–23 form a disordered region; sequence MSDLKCPFSGHTGAVTPAGNTNN. The segment at residues 95 to 218 is a cross-link (tryptophyl-tyrosyl-methioninium (Trp-Tyr) (with M-244)); that stretch reads WHSAGTYRTG…LAAVEMGLIY (124 aa). The active-site Proton acceptor is the histidine 96. A cross-link (tryptophyl-tyrosyl-methioninium (Tyr-Met) (with W-95)) is located at residues 218-244; sequence YVNPEGPHGEPDPVASGRDVRETFARM. Histidine 259 lines the heme b pocket.

This sequence belongs to the peroxidase family. Peroxidase/catalase subfamily. In terms of assembly, homodimer or homotetramer. Heme b is required as a cofactor. In terms of processing, formation of the three residue Trp-Tyr-Met cross-link is important for the catalase, but not the peroxidase activity of the enzyme.

It catalyses the reaction H2O2 + AH2 = A + 2 H2O. The enzyme catalyses 2 H2O2 = O2 + 2 H2O. Bifunctional enzyme with both catalase and broad-spectrum peroxidase activity. This Synechococcus sp. (strain WH7803) protein is Catalase-peroxidase.